We begin with the raw amino-acid sequence, 59 residues long: Cytochrome c oxidase subunit 9, mitochondrial (59 aa).

Topologically, residues 2 to 8 are mitochondrial matrix; sequence TIAPITG. The chain crosses the membrane as a helical span at residues 9–44; sequence TIKRRVIMDIVLGFSLGGVMASYWWWGFHMDKINKR. The Mitochondrial intermembrane portion of the chain corresponds to 45 to 56; the sequence is EKFYAELAERKK. Positions 57–59 are cleaved as a propeptide — removed in mature form; that stretch reads QEN.

Belongs to the fungal cytochrome c oxidase subunit 7a family. In terms of assembly, component of the cytochrome c oxidase (complex IV, CIV), a multisubunit enzyme composed of 12 subunits. The complex is composed of a catalytic core of 3 subunits COX1, COX2 and COX3, encoded in the mitochondrial DNA, and 9 supernumerary subunits COX4, COX5A (or COX5B), COX6, COX7, COX8, COX9, COX12, COX13 and COX26, which are encoded in the nuclear genome. The complex exists as a monomer or a dimer and forms supercomplexes (SCs) in the inner mitochondrial membrane with a dimer of ubiquinol-cytochrome c oxidoreductase (cytochrome b-c1 complex, complex III, CIII), resulting in 2 different assemblies (supercomplexes III(2)IV and III(2)IV(2)).

Its subcellular location is the mitochondrion inner membrane. Its pathway is energy metabolism; oxidative phosphorylation. Functionally, component of the cytochrome c oxidase, the last enzyme in the mitochondrial electron transport chain which drives oxidative phosphorylation. The respiratory chain contains 3 multisubunit complexes succinate dehydrogenase (complex II, CII), ubiquinol-cytochrome c oxidoreductase (cytochrome b-c1 complex, complex III, CIII) and cytochrome c oxidase (complex IV, CIV), that cooperate to transfer electrons derived from NADH and succinate to molecular oxygen, creating an electrochemical gradient over the inner membrane that drives transmembrane transport and the ATP synthase. Cytochrome c oxidase is the component of the respiratory chain that catalyzes the reduction of oxygen to water. Electrons originating from reduced cytochrome c in the intermembrane space (IMS) are transferred via the dinuclear copper A center (CU(A)) of COX2 and heme A of COX1 to the active site in COX1, a binuclear center (BNC) formed by heme A3 and copper B (CU(B)). The BNC reduces molecular oxygen to 2 water molecules using 4 electrons from cytochrome c in the IMS and 4 protons from the mitochondrial matrix. The polypeptide is Cytochrome c oxidase subunit 9, mitochondrial (COX9) (Saccharomyces cerevisiae (strain ATCC 204508 / S288c) (Baker's yeast)).